The primary structure comprises 157 residues: Thioredoxin 2 (157 aa).

Residues 1–22 (MKHILALVVFIISFFCFKDVNC) form the signal peptide. The 112-residue stretch at 46–157 (LRMYNKMPRL…ELTSTIRKHL (112 aa)) folds into the Thioredoxin domain. Residues Cys82 and Cys85 each act as nucleophile in the active site. A disulfide bridge links Cys82 with Cys85.

The protein belongs to the thioredoxin family. Monomer. Component of the translocon PTEX complex composed of HSP101, EXP2, PTEX150, PTEX88 and TRX2. In terms of processing, the disulfide bond between Cys-82 and Cys-85 acts as a redox-active center and is reduced by thioredoxin reductase TRXR.

In terms of biological role, participates in various redox reactions through the reversible oxidation of its active center dithiol to a disulfide and catalyzes dithiol-disulfide exchange reactions. As part of the translocon PTEX complex, plays a role in the export of parasite proteins into the host erythrocyte. The translocon PTEX complex is a multi-protein machinery resident in the parasite parasitophorous vacuolar membrane, responsible for protein secretion into host cells. May contribute to the unfolding of proteins containing the PEXEL localization motif before their passage through the translocon or regulate the PTEX complex function. The chain is Thioredoxin 2 from Plasmodium berghei (strain Anka).